Reading from the N-terminus, the 553-residue chain is Glycerol kinase 2 (553 aa).

Thr-20 lines the substrate pocket. Arg-24 contacts ATP. Residues Arg-94, Tyr-148, and Asp-259 each coordinate substrate. ATP-binding positions include Thr-281, Gly-326, and 427–431; that span reads GMTNN. A helical transmembrane segment spans residues 526–546; the sequence is IFSSMPLGFFIVSSMVMLIGA.

The protein belongs to the FGGY kinase family. As to quaternary structure, interacts with ARMC12 and PLD6.

It is found in the mitochondrion outer membrane. Its subcellular location is the cytoplasm. The enzyme catalyses glycerol + ATP = sn-glycerol 3-phosphate + ADP + H(+). The protein operates within polyol metabolism; glycerol degradation via glycerol kinase pathway; sn-glycerol 3-phosphate from glycerol: step 1/1. Key enzyme in the regulation of glycerol uptake and metabolism. Essential for male fertility and sperm mitochondrial sheath formation. Required for proper arrangement of crescent-like mitochondria to form the mitochondrial sheath during spermatogenesis. Can induce mitochondrial clustering through interactions with PLD6 and up-regulation of phosphatidic acid synthesis in the mitochondria. The protein is Glycerol kinase 2 (GK2) of Macaca fascicularis (Crab-eating macaque).